Reading from the N-terminus, the 646-residue chain is Long-chain fatty acid transport protein 1 (646 aa).

Over 1–13 (MRTPGAGTASVAS) the chain is Extracellular. Residues 14-34 (LGLLWLLGLPWTWSAAAAFGV) traverse the membrane as a helical segment. Over 35 to 646 (YVGSGGWRFL…ARICAGDFSL (612 aa)) the chain is Cytoplasmic. The segment at 191 to 475 (EVSEQLGKSL…YVSDSATNKK (285 aa)) is sufficient for oligomerization. AMP is bound at residue 246–257 (YIYTSGTTGLPK).

Belongs to the ATP-dependent AMP-binding enzyme family. As to quaternary structure, self-associates. May function as a homodimer. Interacts with EPRS1; mediates the translocation of SLC27A1 from the cytoplasm to the plasma membrane thereby increasing the uptake of long-chain fatty acids. Interacts with DGAT2 and this interaction is enhanced in the presence of ZFYVE1. In terms of tissue distribution, expressed in muscle.

It localises to the cell membrane. It is found in the endomembrane system. The protein resides in the cytoplasm. The enzyme catalyses a fatty acid(in) = a fatty acid(out). It carries out the reaction (9Z)-octadecenoate(out) = (9Z)-octadecenoate(in). It catalyses the reaction hexadecanoate(out) = hexadecanoate(in). The catalysed reaction is (5Z,8Z,11Z,14Z)-eicosatetraenoate(out) = (5Z,8Z,11Z,14Z)-eicosatetraenoate(in). The enzyme catalyses (9Z,12Z)-octadecadienoate(out) = (9Z,12Z)-octadecadienoate(in). It carries out the reaction a long-chain fatty acid + ATP + CoA = a long-chain fatty acyl-CoA + AMP + diphosphate. It catalyses the reaction (5Z,8Z,11Z,14Z)-eicosatetraenoate + ATP + CoA = (5Z,8Z,11Z,14Z)-eicosatetraenoyl-CoA + AMP + diphosphate. The catalysed reaction is a very long-chain fatty acid + ATP + CoA = a very long-chain fatty acyl-CoA + AMP + diphosphate. The enzyme catalyses tetracosanoate + ATP + CoA = tetracosanoyl-CoA + AMP + diphosphate. With respect to regulation, inhibited by Triacsin C. In terms of biological role, mediates the import of long-chain fatty acids (LCFA) into the cell by facilitating their transport at the plasma membrane. Also functions as an acyl-CoA ligase catalyzing the ATP-dependent formation of fatty acyl-CoA using LCFA and very-long-chain fatty acids (VLCFA) as substrates, which prevents fatty acid efflux from cells and might drive more fatty acid uptake. May act directly as a bona fide transporter, or alternatively, in a cytoplasmic or membrane-associated multimeric protein complex to trap and draw fatty acids towards accumulation. Plays a pivotal role in regulating available LCFA substrates from exogenous sources in tissues undergoing high levels of beta-oxidation or triglyceride synthesis. May be involved in regulation of cholesterol metabolism. Probably involved in fatty acid transport across the blood barrier. The polypeptide is Long-chain fatty acid transport protein 1 (Rattus norvegicus (Rat)).